The following is a 426-amino-acid chain: Serine--tRNA ligase (426 aa).

Residue 230-232 coordinates L-serine; it reads TAE. 261-263 lines the ATP pocket; it reads RSE. Glutamate 284 serves as a coordination point for L-serine. 348–351 is a binding site for ATP; the sequence is EISS. Serine 384 is a binding site for L-serine.

The protein belongs to the class-II aminoacyl-tRNA synthetase family. Type-1 seryl-tRNA synthetase subfamily. As to quaternary structure, homodimer. The tRNA molecule binds across the dimer.

It localises to the cytoplasm. It catalyses the reaction tRNA(Ser) + L-serine + ATP = L-seryl-tRNA(Ser) + AMP + diphosphate + H(+). It carries out the reaction tRNA(Sec) + L-serine + ATP = L-seryl-tRNA(Sec) + AMP + diphosphate + H(+). It participates in aminoacyl-tRNA biosynthesis; selenocysteinyl-tRNA(Sec) biosynthesis; L-seryl-tRNA(Sec) from L-serine and tRNA(Sec): step 1/1. Its function is as follows. Catalyzes the attachment of serine to tRNA(Ser). Is also able to aminoacylate tRNA(Sec) with serine, to form the misacylated tRNA L-seryl-tRNA(Sec), which will be further converted into selenocysteinyl-tRNA(Sec). This is Serine--tRNA ligase from Erythrobacter litoralis (strain HTCC2594).